A 246-amino-acid polypeptide reads, in one-letter code: ATP synthase subunit a (246 aa).

A propeptide spans 1–3 (MIY) (removed in mature form). A run of 7 helical transmembrane segments spans residues 25 to 45 (VNNYVMYVALVVTLMYSSVFL), 51 to 71 (LGFNRWGVALLAVYDTILNMV), 79 to 99 (GGMYFPFMFTLFTFMLVANLV), 112 to 132 (LVAIVSFSLSLWFGCVLMGLS), 138 to 158 (FFALFVPGGTPLALVPVLVLI), 178 to 198 (VLSGHLLMLILGTLMFNLMGS), and 203 to 223 (FMGGFMPVMGVIAIVVTEFAI).

The protein belongs to the ATPase A chain family. As to quaternary structure, F-type ATPases have 2 components, CF(1) - the catalytic core - and CF(0) - the membrane proton channel. CF(1) has five subunits: alpha(3), beta(3), gamma(1), delta(1), epsilon(1). CF(0) has three main subunits: a, b and c.

It is found in the mitochondrion inner membrane. In terms of biological role, mitochondrial membrane ATP synthase (F(1)F(0) ATP synthase or Complex V) produces ATP from ADP in the presence of a proton gradient across the membrane which is generated by electron transport complexes of the respiratory chain. F-type ATPases consist of two structural domains, F(1) - containing the extramembraneous catalytic core and F(0) - containing the membrane proton channel, linked together by a central stalk and a peripheral stalk. During catalysis, ATP synthesis in the catalytic domain of F(1) is coupled via a rotary mechanism of the central stalk subunits to proton translocation. Key component of the proton channel; it may play a direct role in the translocation of protons across the membrane. In Debaryomyces hansenii (strain ATCC 36239 / CBS 767 / BCRC 21394 / JCM 1990 / NBRC 0083 / IGC 2968) (Yeast), this protein is ATP synthase subunit a (ATP6).